The primary structure comprises 221 residues: MLEDLRLYQLISPSLPVGSFTYSQGLEWAIEKGWVTNVTELKHWLSNQLMDSLATLELPVLAKLTQLLQQEEWQQAQEWCDFIIANRETKELRLEERQRGLAFSMLLPKLGIELNQTTLPMVKQTQVAAFALAANHWNLTPTKLAAAYAWGWLENAVIVGIKLVPLGQSAGQQLLLEMADVIPQAVEKSQHWPEHLIGSFTPAQVLASSRHESQYTRLFRS.

The protein belongs to the UreF family. UreD, UreF and UreG form a complex that acts as a GTP-hydrolysis-dependent molecular chaperone, activating the urease apoprotein by helping to assemble the nickel containing metallocenter of UreC. The UreE protein probably delivers the nickel.

It localises to the cytoplasm. Its function is as follows. Required for maturation of urease via the functional incorporation of the urease nickel metallocenter. The chain is Urease accessory protein UreF from Aliivibrio fischeri (strain MJ11) (Vibrio fischeri).